Consider the following 268-residue polypeptide: MTTRIAVTGAAGRMGKALIEAVCQSEDAVLGAAIVAPDSSLVGADAGELAGVGKQGVAIVNDLSTVVADFDVLIDFTSPSATVANASVCKAHNKPMVVGTTGFSPAEKAAFEADASTVPTCVASNFSTGVNLCFKLLDIAARVMGNDADIEVYEAHHRHKVDAPSGTALRMGEVLANAVNRDLNEVAVYGREGQTGARDRNTIGFATVRGGDVVGDHTVSFMCEGERVEITHKASSRLSFARGAVRAATWLVEKEPKIYDMQDVLGLK.

Residues 9-14 (GAAGRM), 99-101 (GTT), and 123-126 (ASNF) contribute to the NAD(+) site. The Proton donor/acceptor role is filled by His-156. His-157 serves as a coordination point for (S)-2,3,4,5-tetrahydrodipicolinate. The active-site Proton donor is Lys-160. 166–167 (GT) provides a ligand contact to (S)-2,3,4,5-tetrahydrodipicolinate.

The protein belongs to the DapB family.

It localises to the cytoplasm. The catalysed reaction is (S)-2,3,4,5-tetrahydrodipicolinate + NAD(+) + H2O = (2S,4S)-4-hydroxy-2,3,4,5-tetrahydrodipicolinate + NADH + H(+). The enzyme catalyses (S)-2,3,4,5-tetrahydrodipicolinate + NADP(+) + H2O = (2S,4S)-4-hydroxy-2,3,4,5-tetrahydrodipicolinate + NADPH + H(+). The protein operates within amino-acid biosynthesis; L-lysine biosynthesis via DAP pathway; (S)-tetrahydrodipicolinate from L-aspartate: step 4/4. Its function is as follows. Catalyzes the conversion of 4-hydroxy-tetrahydrodipicolinate (HTPA) to tetrahydrodipicolinate. This chain is 4-hydroxy-tetrahydrodipicolinate reductase, found in Saccharophagus degradans (strain 2-40 / ATCC 43961 / DSM 17024).